We begin with the raw amino-acid sequence, 426 residues long: N-formyl-4-amino-5-aminomethyl-2-methylpyrimidine deformylase (426 aa).

Residues 1-31 (MDQQIYSLQKKVEEHKEELIQLAKTLISYQT) are a coiled coil. A Zn(2+)-binding site is contributed by His-89. Asp-91 is an active-site residue. Asp-122 provides a ligand contact to Zn(2+). Residue Glu-156 is the Proton acceptor of the active site. Zn(2+) contacts are provided by Glu-157, Asp-180, and His-394.

The protein belongs to the peptidase M20A family. The cofactor is Zn(2+). Co(2+) serves as cofactor.

The enzyme catalyses N-formyl-4-amino-5-aminomethyl-2-methylpyrimidine + H2O = 4-amino-5-aminomethyl-2-methylpyrimidine + formate. Its pathway is cofactor biosynthesis; thiamine diphosphate biosynthesis. Its function is as follows. Catalyzes the deformylation of the formylaminopyrimidine N-formyl-4-amino-5-aminomethyl-2-methylpyrimidine (FAMP) to give the corresponding aminopyrimidine. The chain is N-formyl-4-amino-5-aminomethyl-2-methylpyrimidine deformylase from Bacillus subtilis (strain 168).